Reading from the N-terminus, the 366-residue chain is Ubiquitin carboxyl-terminal hydrolase 46 (366 aa).

The USP domain maps to 35 to 365 (FGLVNFGNTC…SGYILFYQSR (331 aa)). Cys-44 acts as the Nucleophile in catalysis. Zn(2+) contacts are provided by Cys-182, Cys-185, Cys-229, and Cys-232. His-313 serves as the catalytic Proton acceptor.

This sequence belongs to the peptidase C19 family. USP12/USP46 subfamily. As to quaternary structure, interacts with WDR48. Interacts with WDR20. Interacts with DMWD. Component of the USP46/WDR20/WDR48 deubiquitinating complex. In terms of tissue distribution, detected in lung and spleen, and at lower levels in brain, kidney, testis and liver.

Its subcellular location is the cytoplasm. It carries out the reaction Thiol-dependent hydrolysis of ester, thioester, amide, peptide and isopeptide bonds formed by the C-terminal Gly of ubiquitin (a 76-residue protein attached to proteins as an intracellular targeting signal).. In terms of biological role, deubiquitinating enzyme that plays a role in behavior, possibly by regulating GABA action. May act by mediating the deubiquitination of GAD1/GAD67. Has almost no deubiquitinating activity by itself and requires the interaction with WDR48 to have a high activity. Not involved in deubiquitination of monoubiquitinated FANCD2. This Rattus norvegicus (Rat) protein is Ubiquitin carboxyl-terminal hydrolase 46.